Consider the following 584-residue polypeptide: Cytosolic Fe-S cluster assembly factor NAR1 (584 aa).

[4Fe-4S] cluster-binding residues include Cys-20, Cys-81, Cys-84, Cys-87, Cys-190, Cys-245, Cys-465, and Cys-469.

It belongs to the NARF family.

Component of the cytosolic Fe/S protein assembly machinery. Required for maturation of extramitochondrial Fe/S proteins. May play a role in the transfer of pre-assembled Fe/S clusters to target apoproteins. The polypeptide is Cytosolic Fe-S cluster assembly factor NAR1 (NAR1) (Candida dubliniensis (strain CD36 / ATCC MYA-646 / CBS 7987 / NCPF 3949 / NRRL Y-17841) (Yeast)).